The chain runs to 265 residues: Mlc titration factor A (265 aa).

H111, H148, H152, and E211 together coordinate Zn(2+).

The protein belongs to the MtfA family. In terms of assembly, interacts with Mlc. It depends on Zn(2+) as a cofactor.

It localises to the cytoplasm. Its function is as follows. Involved in the modulation of the activity of the glucose-phosphotransferase system (glucose-PTS). Interacts with the transcriptional repressor Mlc, preventing its interaction with DNA and leading to the modulation of expression of genes regulated by Mlc, including ptsG, which encodes the PTS system glucose-specific EIICB component. In terms of biological role, shows zinc-dependent metallopeptidase activity. This Klebsiella pneumoniae (strain 342) protein is Mlc titration factor A.